Here is a 316-residue protein sequence, read N- to C-terminus: Succinoglycan biosynthesis protein ExoV (316 aa).

It participates in glycan metabolism; exopolysaccharide biosynthesis. This chain is Succinoglycan biosynthesis protein ExoV (exoV), found in Rhizobium meliloti (strain 1021) (Ensifer meliloti).